The following is a 433-amino-acid chain: MEKLIIQGGQPLVGDVHIEGAKNAVLPIMAAALLASKGPVELTNVPILSDVFMMQDVLKSLDARVKFDEQRNYLMIDANQPLNFEAAFEYVSKMRASIVVMGPLLARLGHARVAMPGGCAIGSRPVDLHLKGFEALGATITQSHGYIEAKADQLVGANIYLDFPSVGATQNIMMAATLAKGTTVIENVAREPEIVDLANVLNKMGAKVFGAGTEEIRIEGVTELKGTEHSIVQDRIEAGTFMIAAAATKGNVLVEEAISEHNKPLLSKLAEMGAQVIEEENGIRIIGPDELKPSNIKTLPYPGFPTDMQAQMTALQLMAHGTSVMTETVFENRFMHLEELRRMNADYQIEGQSVILYGPPELTGAEVAASDLRAAAALVIAGLVANGETLVTNLQYMDRGYYHFHQKLRALGAHISRADFDEAGHRKTTQKLA.

A phosphoenolpyruvate-binding site is contributed by Lys-22–Asn-23. Arg-95 contributes to the UDP-N-acetyl-alpha-D-glucosamine binding site. Cys-119 acts as the Proton donor in catalysis. Cys-119 is modified (2-(S-cysteinyl)pyruvic acid O-phosphothioketal). UDP-N-acetyl-alpha-D-glucosamine is bound by residues Arg-124–Leu-128, Asp-307, and Val-329.

This sequence belongs to the EPSP synthase family. MurA subfamily.

The protein resides in the cytoplasm. The enzyme catalyses phosphoenolpyruvate + UDP-N-acetyl-alpha-D-glucosamine = UDP-N-acetyl-3-O-(1-carboxyvinyl)-alpha-D-glucosamine + phosphate. Its pathway is cell wall biogenesis; peptidoglycan biosynthesis. Cell wall formation. Adds enolpyruvyl to UDP-N-acetylglucosamine. The polypeptide is UDP-N-acetylglucosamine 1-carboxyvinyltransferase 1 (Latilactobacillus sakei subsp. sakei (strain 23K) (Lactobacillus sakei subsp. sakei)).